Consider the following 464-residue polypeptide: Cysteine--tRNA ligase (464 aa).

Cys-28 is a Zn(2+) binding site. Residues 30–40 (PTVYDHSHIGH) carry the 'HIGH' region motif. Positions 205, 230, and 234 each coordinate Zn(2+). The 'KMSKS' region signature appears at 263–267 (KMSKS). Residue Lys-266 coordinates ATP.

Belongs to the class-I aminoacyl-tRNA synthetase family. It depends on Zn(2+) as a cofactor.

The protein localises to the cytoplasm. It catalyses the reaction tRNA(Cys) + L-cysteine + ATP = L-cysteinyl-tRNA(Cys) + AMP + diphosphate. The polypeptide is Cysteine--tRNA ligase (Ignicoccus hospitalis (strain KIN4/I / DSM 18386 / JCM 14125)).